We begin with the raw amino-acid sequence, 553 residues long: Formate--tetrahydrofolate ligase (553 aa).

Residue 56–63 (TPKGEGKT) participates in ATP binding.

This sequence belongs to the formate--tetrahydrofolate ligase family.

The enzyme catalyses (6S)-5,6,7,8-tetrahydrofolate + formate + ATP = (6R)-10-formyltetrahydrofolate + ADP + phosphate. The protein operates within one-carbon metabolism; tetrahydrofolate interconversion. The chain is Formate--tetrahydrofolate ligase from Haloarcula marismortui (strain ATCC 43049 / DSM 3752 / JCM 8966 / VKM B-1809) (Halobacterium marismortui).